A 365-amino-acid polypeptide reads, in one-letter code: Alanine racemase (365 aa).

The active-site Proton acceptor; specific for D-alanine is lysine 32. At lysine 32 the chain carries N6-(pyridoxal phosphate)lysine. Arginine 128 contacts substrate. The Proton acceptor; specific for L-alanine role is filled by tyrosine 257. Methionine 305 is a binding site for substrate.

It belongs to the alanine racemase family. Pyridoxal 5'-phosphate is required as a cofactor.

The enzyme catalyses L-alanine = D-alanine. It participates in amino-acid biosynthesis; D-alanine biosynthesis; D-alanine from L-alanine: step 1/1. Its function is as follows. Catalyzes the interconversion of L-alanine and D-alanine. May also act on other amino acids. In Francisella tularensis subsp. mediasiatica (strain FSC147), this protein is Alanine racemase (alr).